Reading from the N-terminus, the 91-residue chain is UPF0512 protein F (91 aa).

It belongs to the UPF0512 family.

This chain is UPF0512 protein F, found in Dictyostelium discoideum (Social amoeba).